Reading from the N-terminus, the 284-residue chain is MVLMIVSGRSGSGKSVALRALEDMGFYCVDNLPIILLPNLASSLMPRNTPAAISIDVRNMPGSSEIFEKVLTKLNKKFSTRLIFLDANHNTLIQRYSETRRLHPLSGNHLSLEKAIDEENILLEPLRSRADLIINTSEMSVHQLSEMLRVRSLGTKERKLSMVFESFGFKYGLPIYADYVFDVRFLPNPHWDPKLRSMTGLDKPVVDFLKRHSEVHHFIYQTLHYLNQWLPMLENNDRSYLTIAIGCTGGKHRSVYIAEQLADYFRSRGKNVQLRHRTLEKRKE.

Residue 8–15 (GRSGSGKS) participates in ATP binding. 56–59 (DVRN) provides a ligand contact to GTP. Residues 266–284 (RSRGKNVQLRHRTLEKRKE) are RNA-binding.

Belongs to the RapZ-like family. RapZ subfamily. Homotrimer.

Its function is as follows. Modulates the synthesis of GlmS, by affecting the processing and stability of the regulatory small RNA GlmZ. When glucosamine-6-phosphate (GlcN6P) concentrations are high in the cell, RapZ binds GlmZ and targets it to cleavage by RNase E. Consequently, GlmZ is inactivated and unable to activate GlmS synthesis. Under low GlcN6P concentrations, RapZ is sequestered and inactivated by an other regulatory small RNA, GlmY, preventing GlmZ degradation and leading to synthesis of GlmS. The protein is RNase adapter protein RapZ of Hamiltonella defensa subsp. Acyrthosiphon pisum (strain 5AT).